Reading from the N-terminus, the 103-residue chain is Probable protease inhibitor Egf0.4a (103 aa).

A signal peptide spans Met1 to Thr22. In terms of domain architecture, TIL spans Cys35–Cys87.

Belongs to the polydnaviridae EGF-like motif protein family.

The protein is Probable protease inhibitor Egf0.4a (O4) of Microplitis demolitor (Parasitoid wasp).